Reading from the N-terminus, the 148-residue chain is Lysozyme C-1 (148 aa).

The first 18 residues, Met1–Ala18, serve as a signal peptide directing secretion. Positions Lys19–Val148 constitute a C-type lysozyme domain. Cystine bridges form between Cys24–Cys146, Cys48–Cys134, Cys83–Cys99, and Cys95–Cys113. Active-site residues include Glu53 and Asp71.

This sequence belongs to the glycosyl hydrolase 22 family. As to quaternary structure, monomer. Expressed in lung, small intestine and spleen.

Its subcellular location is the secreted. It catalyses the reaction Hydrolysis of (1-&gt;4)-beta-linkages between N-acetylmuramic acid and N-acetyl-D-glucosamine residues in a peptidoglycan and between N-acetyl-D-glucosamine residues in chitodextrins.. Its function is as follows. Lysozymes have primarily a bacteriolytic function; those in tissues and body fluids are associated with the monocyte-macrophage system and enhance the activity of immunoagents. In the intestine they may also have a digestive function. The protein is Lysozyme C-1 (Lyz1) of Rattus norvegicus (Rat).